The primary structure comprises 482 residues: tRNA sulfurtransferase (482 aa).

The 105-residue stretch at 61-165 (LAIRDALTRI…DDRLLLIKGR (105 aa)) folds into the THUMP domain. Residues 183 to 184 (LI), K265, G287, and Q296 each bind ATP. C344 and C456 are disulfide-bonded. A Rhodanese domain is found at 404–482 (FGPNDVILDI…GFNNVKVYRL (79 aa)). The active-site Cysteine persulfide intermediate is the C456.

This sequence belongs to the ThiI family.

It is found in the cytoplasm. It carries out the reaction [ThiI sulfur-carrier protein]-S-sulfanyl-L-cysteine + a uridine in tRNA + 2 reduced [2Fe-2S]-[ferredoxin] + ATP + H(+) = [ThiI sulfur-carrier protein]-L-cysteine + a 4-thiouridine in tRNA + 2 oxidized [2Fe-2S]-[ferredoxin] + AMP + diphosphate. It catalyses the reaction [ThiS sulfur-carrier protein]-C-terminal Gly-Gly-AMP + S-sulfanyl-L-cysteinyl-[cysteine desulfurase] + AH2 = [ThiS sulfur-carrier protein]-C-terminal-Gly-aminoethanethioate + L-cysteinyl-[cysteine desulfurase] + A + AMP + 2 H(+). It participates in cofactor biosynthesis; thiamine diphosphate biosynthesis. Catalyzes the ATP-dependent transfer of a sulfur to tRNA to produce 4-thiouridine in position 8 of tRNAs, which functions as a near-UV photosensor. Also catalyzes the transfer of sulfur to the sulfur carrier protein ThiS, forming ThiS-thiocarboxylate. This is a step in the synthesis of thiazole, in the thiamine biosynthesis pathway. The sulfur is donated as persulfide by IscS. This chain is tRNA sulfurtransferase, found in Shigella boydii serotype 18 (strain CDC 3083-94 / BS512).